Consider the following 75-residue polypeptide: Metallothionein-like protein 1 (75 aa).

The protein belongs to the metallothionein superfamily. Type 15 family.

Functionally, metallothioneins have a high content of cysteine residues that bind various heavy metals. This is Metallothionein-like protein 1 (ALI1) from Triticum aestivum (Wheat).